We begin with the raw amino-acid sequence, 456 residues long: Equilibrative nucleoside transporter 2 (456 aa).

The helical transmembrane segment at 13–33 (LVGISFFILGLGTLLPWNFFI) threads the bilayer. A glycan (N-linked (GlcNAc...) asparagine) is linked at N56. 5 helical membrane-spanning segments follow: residues 69 to 89 (WVTL…SFLY), 98 to 118 (ILGS…LVKV), 123 to 143 (GLFF…CAVL), 161 to 181 (LFLS…LMSL), and 192 to 212 (LGYF…YLSL). Positions 248 to 277 (GVPISPQQASPTLDLDPEKEPEPEEPQKPG) are disordered. S252 is subject to Phosphoserine. Positions 263–275 (DPEKEPEPEEPQK) are enriched in basic and acidic residues. Helical transmembrane passes span 288–308 (IWLT…VFPA), 323–343 (WGLF…DWLG), 360–380 (LLPL…LCHV), 396–416 (FITF…LTMC), and 432–452 (ALMT…SFLF).

Belongs to the SLC29A/ENT transporter (TC 2.A.57) family.

The protein localises to the apical cell membrane. It is found in the basolateral cell membrane. Its subcellular location is the nucleus membrane. It catalyses the reaction inosine(in) = inosine(out). The enzyme catalyses adenosine(in) = adenosine(out). It carries out the reaction uridine(out) = uridine(in). The catalysed reaction is thymidine(in) = thymidine(out). It catalyses the reaction hypoxanthine(out) = hypoxanthine(in). The enzyme catalyses adenine(out) = adenine(in). It carries out the reaction cytidine(in) = cytidine(out). The catalysed reaction is thymine(out) = thymine(in). It catalyses the reaction uracil(in) = uracil(out). The enzyme catalyses guanine(out) = guanine(in). It carries out the reaction guanosine(in) = guanosine(out). Functionally, bidirectional uniporter involved in the facilitative transport of nucleosides and nucleobases, and contributes to maintaining their cellular homeostasis. Functions as a Na(+)-independent, passive transporter. Involved in the transport of nucleosides such as inosine, adenosine, uridine, thymidine, cytidine and guanosine. Also able to transport purine nucleobases (hypoxanthine, adenine, guanine) and pyrimidine nucleobases (thymine, uracil). Involved in nucleoside transport at basolateral membrane of kidney cells, allowing liver absorption of nucleoside metabolites. Mediates apical nucleoside uptake into Sertoli cells, thereby regulating the transport of nucleosides in testis across the blood-testis-barrier. Mediates both the influx and efflux of hypoxanthine in skeletal muscle microvascular endothelial cells to control the amount of intracellular hypoxanthine available for xanthine oxidase-mediated ROS production. The sequence is that of Equilibrative nucleoside transporter 2 from Mus musculus (Mouse).